A 165-amino-acid polypeptide reads, in one-letter code: Copper-resistant cuproprotein CopI (165 aa).

The signal sequence occupies residues 1–23; sequence MKNRILRPALLCVAALFATTAQA. Positions 25-42 are enriched in basic and acidic residues; it reads AGHDHGSAHAGAHAHDAD. A disordered region spans residues 25–50; sequence AGHDHGSAHAGAHAHDADTPYGRPGD. Cu(2+) contacts are provided by H93, C148, H153, and M158.

This sequence belongs to the CopI family. Monomer.

Its subcellular location is the periplasm. Its function is as follows. Involved in copper tolerance. Required for copper resistance under both aerobic and anaerobic photosynthetic growth conditions. Binds copper. Could be an important defense against copper in the periplasm and may protect not only c type cytochromes but also other proteins with cysteine residues from copper ions that may catalyze nonnative disulfide bond formation. This Rubrivivax gelatinosus (Rhodocyclus gelatinosus) protein is Copper-resistant cuproprotein CopI.